Here is a 300-residue protein sequence, read N- to C-terminus: Putative glycosyltransferase ORF300 (300 aa).

Belongs to the glycosyltransferase group 1 family. Glycosyltransferase 4 subfamily.

The chain is Putative glycosyltransferase ORF300 from Acidianus hospitalis (AFV-1).